A 73-amino-acid chain; its full sequence is Photosystem I reaction center subunit IV (73 aa).

It belongs to the PsaE family.

It is found in the cellular thylakoid membrane. Functionally, stabilizes the interaction between PsaC and the PSI core, assists the docking of the ferredoxin to PSI and interacts with ferredoxin-NADP oxidoreductase. This chain is Photosystem I reaction center subunit IV, found in Synechococcus sp. (strain JA-3-3Ab) (Cyanobacteria bacterium Yellowstone A-Prime).